We begin with the raw amino-acid sequence, 97 residues long: Eotaxin (97 aa).

Residues 1 to 23 form the signal peptide; it reads MQSSTALLFLLLTVTSFTSQVLA. Intrachain disulfides connect Cys32–Cys57 and Cys33–Cys73. An O-linked (GalNAc...) threonine glycan is attached at Thr94.

The protein belongs to the intercrine beta (chemokine CC) family. Expressed constitutively in the thymus. Expression inducible in the lung (type I alveolar epithelial cells), intestine, heart, spleen, kidney.

Its subcellular location is the secreted. In response to the presence of allergens, this protein directly promotes the accumulation of eosinophils (a prominent feature of allergic inflammatory reactions), but not lymphocytes, macrophages or neutrophils. Binds to CCR3. The protein is Eotaxin (Ccl11) of Mus musculus (Mouse).